A 339-amino-acid polypeptide reads, in one-letter code: Uroporphyrinogen decarboxylase (339 aa).

Residues 21–25 (RQAGR), Asp-71, Tyr-147, Ser-202, and His-315 contribute to the substrate site.

Belongs to the uroporphyrinogen decarboxylase family. As to quaternary structure, homodimer.

It localises to the cytoplasm. It catalyses the reaction uroporphyrinogen III + 4 H(+) = coproporphyrinogen III + 4 CO2. The protein operates within porphyrin-containing compound metabolism; protoporphyrin-IX biosynthesis; coproporphyrinogen-III from 5-aminolevulinate: step 4/4. Functionally, catalyzes the decarboxylation of four acetate groups of uroporphyrinogen-III to yield coproporphyrinogen-III. In Helicobacter pylori (strain Shi470), this protein is Uroporphyrinogen decarboxylase.